The chain runs to 344 residues: Inositol 2-dehydrogenase/D-chiro-inositol 3-dehydrogenase (344 aa).

Belongs to the Gfo/Idh/MocA family. In terms of assembly, homotetramer.

It carries out the reaction myo-inositol + NAD(+) = scyllo-inosose + NADH + H(+). The catalysed reaction is 1D-chiro-inositol + NAD(+) = scyllo-inosine + NADH + H(+). Its pathway is polyol metabolism; myo-inositol degradation into acetyl-CoA; acetyl-CoA from myo-inositol: step 1/7. Involved in the oxidation of myo-inositol (MI) and D-chiro-inositol (DCI) to 2-keto-myo-inositol (2KMI or 2-inosose) and 1-keto-D-chiro-inositol (1KDCI), respectively. This chain is Inositol 2-dehydrogenase/D-chiro-inositol 3-dehydrogenase, found in Bacillus velezensis (strain DSM 23117 / BGSC 10A6 / LMG 26770 / FZB42) (Bacillus amyloliquefaciens subsp. plantarum).